Reading from the N-terminus, the 185-residue chain is Ribosome maturation factor RimM (185 aa).

The PRC barrel domain maps to 106–185 (TGDYYWKDLI…TIEVDWDPGF (80 aa)).

The protein belongs to the RimM family. In terms of assembly, binds ribosomal protein uS19.

Its subcellular location is the cytoplasm. Functionally, an accessory protein needed during the final step in the assembly of 30S ribosomal subunit, possibly for assembly of the head region. Essential for efficient processing of 16S rRNA. May be needed both before and after RbfA during the maturation of 16S rRNA. It has affinity for free ribosomal 30S subunits but not for 70S ribosomes. The polypeptide is Ribosome maturation factor RimM (Photorhabdus laumondii subsp. laumondii (strain DSM 15139 / CIP 105565 / TT01) (Photorhabdus luminescens subsp. laumondii)).